Consider the following 485-residue polypeptide: dTDP-4-amino-4,6-dideoxy-D-glucose ammonia-lyase (485 aa).

[4Fe-4S] cluster contacts are provided by Cys141, Cys145, and Cys148.

It belongs to the radical SAM superfamily. DesII family. As to quaternary structure, monomer. Requires [4Fe-4S] cluster as cofactor.

The catalysed reaction is dTDP-4-amino-4,6-dideoxy-alpha-D-glucose + AH2 + S-adenosyl-L-methionine = dTDP-3-dehydro-4,6-dideoxy-alpha-D-glucose + 5'-deoxyadenosine + L-methionine + A + NH4(+) + H(+). Functionally, involved in the biosynthesis of dTDP-alpha-D-desosamine, a sugar found in several bacterial macrolide antibiotics. Catalyzes the SAM-dependent deamination of dTDP-4-amino-4,6-deoxyglucose (dTDP-viosamine) to yield dTDP-3-keto-4,6-deoxyglucose. It can also catalyze the oxidative dehydrogenation of the non-physiological substrate dTDP-D-quinovose to dTDP-3-keto-6-deoxy-d-glucose. It can also deaminate dTDP-3-amino-3,6-deoxyglucose. This chain is dTDP-4-amino-4,6-dideoxy-D-glucose ammonia-lyase, found in Streptomyces venezuelae.